We begin with the raw amino-acid sequence, 414 residues long: Serine--tRNA ligase (414 aa).

230 to 232 (TAE) contacts L-serine. 261-263 (RKE) is a binding site for ATP. Residue Glu-284 participates in L-serine binding. 348-351 (EISS) provides a ligand contact to ATP. Ser-382 contributes to the L-serine binding site.

This sequence belongs to the class-II aminoacyl-tRNA synthetase family. Type-1 seryl-tRNA synthetase subfamily. In terms of assembly, homodimer. The tRNA molecule binds across the dimer.

The protein resides in the cytoplasm. It catalyses the reaction tRNA(Ser) + L-serine + ATP = L-seryl-tRNA(Ser) + AMP + diphosphate + H(+). The enzyme catalyses tRNA(Sec) + L-serine + ATP = L-seryl-tRNA(Sec) + AMP + diphosphate + H(+). It participates in aminoacyl-tRNA biosynthesis; selenocysteinyl-tRNA(Sec) biosynthesis; L-seryl-tRNA(Sec) from L-serine and tRNA(Sec): step 1/1. Its function is as follows. Catalyzes the attachment of serine to tRNA(Ser). Is also able to aminoacylate tRNA(Sec) with serine, to form the misacylated tRNA L-seryl-tRNA(Sec), which will be further converted into selenocysteinyl-tRNA(Sec). This chain is Serine--tRNA ligase, found in Nitratiruptor sp. (strain SB155-2).